A 247-amino-acid chain; its full sequence is Segregation and condensation protein A (247 aa).

It belongs to the ScpA family. Component of a cohesin-like complex composed of ScpA, ScpB and the Smc homodimer, in which ScpA and ScpB bind to the head domain of Smc. The presence of the three proteins is required for the association of the complex with DNA.

It is found in the cytoplasm. Participates in chromosomal partition during cell division. May act via the formation of a condensin-like complex containing Smc and ScpB that pull DNA away from mid-cell into both cell halves. In Bacillus cereus (strain 03BB102), this protein is Segregation and condensation protein A.